The following is a 150-amino-acid chain: Protein-export protein SecB (150 aa).

This sequence belongs to the SecB family. As to quaternary structure, homotetramer, a dimer of dimers. One homotetramer interacts with 1 SecA dimer.

The protein resides in the cytoplasm. Functionally, one of the proteins required for the normal export of preproteins out of the cell cytoplasm. It is a molecular chaperone that binds to a subset of precursor proteins, maintaining them in a translocation-competent state. It also specifically binds to its receptor SecA. The sequence is that of Protein-export protein SecB from Chromobacterium violaceum (strain ATCC 12472 / DSM 30191 / JCM 1249 / CCUG 213 / NBRC 12614 / NCIMB 9131 / NCTC 9757 / MK).